The chain runs to 506 residues: MQEIKRYLQLDRPQQHDFLYPLIFQEYIYALAHDRGFNRSSLLENPGYDNKSSLLIVKRLITRMYQQNHFWISSNDSNQNPFFGRNKNLYPQILSEGFAFILELPFSLRLILSLERKKKKIVKSQNLRSIHSIFPFLEDNFSHFPFVLDILIPHPIHLEILVQTLRCWVKDASSLHLLRFFLHEYWNWNSLSTPKKASSSFSKRNQRLFFFLYNSHVCEYESIFVFLRNQSSHLRSTSSGALLERIYFYGKIERLVNVFLKDFQINLCLLKDPFMHYVRYQEKSILASKGTPLFMTKWKYYLVPFWQCYFSLWFHPRRIYLNQLSKNFLEFGGYLSSVRLNASVIRSQILENSFLINNAINKFDTFVPIIPLIGSLAKAQFCNVLGYPISKLVRTDLSDSDIIDRFGRICRNLSHYHSGSSKRKSLYRIKYILRLSCARTLARKHKSTVRAFLKRLGSELLEEFLMSEEQVLSLTFPKASSTLRGVYRSRIWFLDIICLHDLVNQK.

This sequence belongs to the intron maturase 2 family. MatK subfamily.

Its subcellular location is the plastid. The protein resides in the chloroplast. In terms of biological role, usually encoded in the trnK tRNA gene intron. Probably assists in splicing its own and other chloroplast group II introns. This Jasminum nudiflorum (Winter jasmine) protein is Maturase K.